A 185-amino-acid chain; its full sequence is NEDD8-conjugating enzyme UBE2F (185 aa).

Residues 1-29 are interaction with uba3; that stretch reads MLTLASKLKREEGVRAGRTPAGSNDAAHR. A UBC core domain is found at 32–185; that stretch reads IRDRLLIKEV…VQDFIKNYAR (154 aa). The Glycyl thioester intermediate role is filled by C116.

It belongs to the ubiquitin-conjugating enzyme family. UBE2F subfamily.

The enzyme catalyses [E1 NEDD8-activating enzyme]-S-[NEDD8 protein]-yl-L-cysteine + [E2 NEDD8-conjugating enzyme]-L-cysteine = [E1 NEDD8-activating enzyme]-L-cysteine + [E2 NEDD8-conjugating enzyme]-S-[NEDD8-protein]-yl-L-cysteine.. The protein operates within protein modification; protein neddylation. Functionally, accepts the ubiquitin-like protein NEDD8 from the UBA3-NAE1 E1 complex and catalyzes its covalent attachment to other proteins. Together with the E3 ubiquitin ligase rnf7/rbx2, specifically neddylates cullin-5 (cul5). Does not neddylate cul1, cul2, cul3, cul4a or cul4b. The sequence is that of NEDD8-conjugating enzyme UBE2F (ube2f) from Danio rerio (Zebrafish).